The chain runs to 401 residues: Methyltransferase cfoC (401 aa).

Asp268 is an S-adenosyl-L-methionine binding site. Catalysis depends on His308, which acts as the Proton acceptor.

Belongs to the class I-like SAM-binding methyltransferase superfamily. Cation-independent O-methyltransferase family.

Its pathway is secondary metabolite biosynthesis; flavonoid biosynthesis. Its function is as follows. Methyltransferase; part of the gene cluster that mediates the biosynthesis of chlorflavonin, a fungal flavonoid with acetolactate synthase inhibitory activity. Within the pathway, cfoC is responsible for the methylation at position C8-OH of flavonoid. The pathway begins with the PKS-NRPS hybrid synthetase cfoA that uses benzoic acid or p-hydroxybenzoic acid as a starter unit with four rounds of chain elongation using malonyl-CoA to form the chalcone skeleton. Then, a new type of chalcone isomerase, cfoK, catalyzes the conversion of the chalcone into a flavanone by a histidine-mediated oxa-Michael addition mechanism. The desaturation of flavanone to flavone is catalyzed by a new type of flavone synthase, the flavin mononucleotide (FMN)-dependent oxidoreductase cfoJ. Monooxygenases cfoF, cfoG, and P450 cfoH are responsible for the hydroxylation of the flavonoid skeleton at sites C3, C8, and C2', respectively. Like cfoF, the dehydratase cfoI also plays a role in the hydroxylation of position C3. Methyltransferases cfoB, cfoC, and cfoD then catalyze the methylation of C7-OH, C8-OH, and C3-OH, respectively. Finally, the monooxygenase cfoE is responsible for the chlorination of flavonoid at position C3'. In Aspergillus candidus, this protein is Methyltransferase cfoC.